Consider the following 63-residue polypeptide: Large ribosomal subunit protein bL28 (63 aa).

The protein belongs to the bacterial ribosomal protein bL28 family.

The sequence is that of Large ribosomal subunit protein bL28 from Heliobacterium modesticaldum (strain ATCC 51547 / Ice1).